The following is a 440-amino-acid chain: Ribosomal protein uS12 methylthiotransferase RimO (440 aa).

One can recognise an MTTase N-terminal domain in the interval 1 to 117 (MKVHLTSLGC…VIEAVAGKES (117 aa)). 6 residues coordinate [4Fe-4S] cluster: cysteine 10, cysteine 46, cysteine 80, cysteine 155, cysteine 159, and cysteine 162. The Radical SAM core domain occupies 141–371 (CATPHTVYVK…MTAQIDISSR (231 aa)). The TRAM domain occupies 374–440 (AKRVGSREPV…SAYDLTGEAQ (67 aa)).

Belongs to the methylthiotransferase family. RimO subfamily. It depends on [4Fe-4S] cluster as a cofactor.

The protein resides in the cytoplasm. It catalyses the reaction L-aspartate(89)-[ribosomal protein uS12]-hydrogen + (sulfur carrier)-SH + AH2 + 2 S-adenosyl-L-methionine = 3-methylsulfanyl-L-aspartate(89)-[ribosomal protein uS12]-hydrogen + (sulfur carrier)-H + 5'-deoxyadenosine + L-methionine + A + S-adenosyl-L-homocysteine + 2 H(+). Its function is as follows. Catalyzes the methylthiolation of an aspartic acid residue of ribosomal protein uS12. This is Ribosomal protein uS12 methylthiotransferase RimO from Desulfosudis oleivorans (strain DSM 6200 / JCM 39069 / Hxd3) (Desulfococcus oleovorans).